The chain runs to 354 residues: MFERLEVMRKTYYALQEKLASGISDVKEITKLMKELKSLEDAVVAYEKYLSLKEQLKDLEELLELETESSVLEMAKAEEKSLESDIENLEESLRILLLPKDPDDDKNVIIEIKGAAGGDEGNIFAGDLFKMYSKYAESMGWKVTLVNTTPGSSGGFAGIEFIISGENAFSYLKHESGVHRVQRVPETESQGRIHTSTAVVLALPEQEDIEYDVKWEDIRFDTYNSSGAGGQSVNTTYSAVRLTHIPTNVVVTSQEERSQHANKDRAYKLLVTRIYDKIQQEQLEKEGESRKALIGRGNRSEKIRTYNYPQNRVTDHRIGLTINRLDAIMEGRIDLIIEPLINEIQKEALEGQSK.

Glutamine 231 bears the N5-methylglutamine mark.

Belongs to the prokaryotic/mitochondrial release factor family. Methylated by PrmC. Methylation increases the termination efficiency of RF1.

It localises to the cytoplasm. In terms of biological role, peptide chain release factor 1 directs the termination of translation in response to the peptide chain termination codons UAG and UAA. This chain is Peptide chain release factor 1, found in Acholeplasma laidlawii (strain PG-8A).